Here is a 173-residue protein sequence, read N- to C-terminus: dCTP deaminase, dUMP-forming (173 aa).

DCTP contacts are provided by residues 93 to 98 (RSSTGR), aspartate 111, 119 to 121 (TLE), glutamine 138, and tyrosine 151. Catalysis depends on glutamate 121, which acts as the Proton donor/acceptor.

This sequence belongs to the dCTP deaminase family. As to quaternary structure, homotrimer.

It catalyses the reaction dCTP + 2 H2O = dUMP + NH4(+) + diphosphate. The protein operates within pyrimidine metabolism; dUMP biosynthesis; dUMP from dCTP: step 1/1. Its function is as follows. Bifunctional enzyme that catalyzes both the deamination of dCTP to dUTP and the hydrolysis of dUTP to dUMP without releasing the toxic dUTP intermediate. The polypeptide is dCTP deaminase, dUMP-forming (Clostridium botulinum (strain Eklund 17B / Type B)).